Reading from the N-terminus, the 184-residue chain is UPF0149 protein Avin_47340 (184 aa).

It belongs to the UPF0149 family.

This chain is UPF0149 protein Avin_47340, found in Azotobacter vinelandii (strain DJ / ATCC BAA-1303).